The chain runs to 370 residues: MTARNLFLLPGDGIGPEAMGEVRKIIAYMNEAMNAGFVTDEGLVGGCAYDAHGAAISEADMQKALAADAVLFGAVGGPKWDSVPYEVRPEAGLLRLRKDLQLFANLRPAICYPALAAASSLKPELVEGLDILIIRELTGGVYFGEPKEIIDLGNGQKRGIDTQVYDTYEIERIAGVAFEMARTRQNRVCSMEKRNVMKSGVLWNQVVTETHKAKYSDVQLEHMLADAGGMQLVRQPKQFDVIVTDNLFGDMLSDVAAMLTGSLGMLPSASLGAPDGKTGKRKALYEPVHGSAPDIAGKGIANPIAMIASFAMCLRYSFNLVKEADDLEKAIANVLDKGIRTGDIMADGARQVGTVEMGDAILAEFKTLSA.

Glycine 77–glutamate 90 serves as a coordination point for NAD(+). Residues arginine 97, arginine 107, arginine 135, and aspartate 226 each coordinate substrate. Mg(2+)-binding residues include aspartate 226, aspartate 250, and aspartate 254. An NAD(+)-binding site is contributed by glycine 290 to asparagine 302.

Belongs to the isocitrate and isopropylmalate dehydrogenases family. LeuB type 1 subfamily. As to quaternary structure, homodimer. The cofactor is Mg(2+). It depends on Mn(2+) as a cofactor.

The protein resides in the cytoplasm. The catalysed reaction is (2R,3S)-3-isopropylmalate + NAD(+) = 4-methyl-2-oxopentanoate + CO2 + NADH. The protein operates within amino-acid biosynthesis; L-leucine biosynthesis; L-leucine from 3-methyl-2-oxobutanoate: step 3/4. In terms of biological role, catalyzes the oxidation of 3-carboxy-2-hydroxy-4-methylpentanoate (3-isopropylmalate) to 3-carboxy-4-methyl-2-oxopentanoate. The product decarboxylates to 4-methyl-2 oxopentanoate. This Rhizobium johnstonii (strain DSM 114642 / LMG 32736 / 3841) (Rhizobium leguminosarum bv. viciae) protein is 3-isopropylmalate dehydrogenase.